Reading from the N-terminus, the 340-residue chain is Phosphoribosylformylglycinamidine cyclo-ligase (340 aa).

It belongs to the AIR synthase family.

The protein localises to the cytoplasm. It catalyses the reaction 2-formamido-N(1)-(5-O-phospho-beta-D-ribosyl)acetamidine + ATP = 5-amino-1-(5-phospho-beta-D-ribosyl)imidazole + ADP + phosphate + H(+). Its pathway is purine metabolism; IMP biosynthesis via de novo pathway; 5-amino-1-(5-phospho-D-ribosyl)imidazole from N(2)-formyl-N(1)-(5-phospho-D-ribosyl)glycinamide: step 2/2. This is Phosphoribosylformylglycinamidine cyclo-ligase from Crocosphaera subtropica (strain ATCC 51142 / BH68) (Cyanothece sp. (strain ATCC 51142)).